Reading from the N-terminus, the 307-residue chain is Ubiquitin recognition factor in ER-associated degradation protein 1 (307 aa).

At Met-1 the chain carries N-acetylmethionine. 5 positions are modified to phosphoserine: Ser-129, Ser-231, Ser-245, Ser-247, and Ser-299. Disordered regions lie at residues 231–256 and 288–307; these read SGNRLDGKKKGVEPSPSPIKPGDIKR and GRFVAFSGEGQSLRKKGRKP.

It belongs to the UFD1 family. In terms of assembly, heterodimer with NPLOC4, this heterodimer binds VCP and inhibits Golgi membrane fusion. Interacts with USP13. Interacts with ZFAND2B; probably through VCP. Found in adult heart, skeletal muscle and pancreas, and in fetal liver and kidney.

It is found in the nucleus. It localises to the cytoplasm. Its subcellular location is the cytosol. It participates in protein degradation; proteasomal ubiquitin-dependent pathway. Its function is as follows. Essential component of the ubiquitin-dependent proteolytic pathway which degrades ubiquitin fusion proteins. The ternary complex containing UFD1, VCP and NPLOC4 binds ubiquitinated proteins and is necessary for the export of misfolded proteins from the ER to the cytoplasm, where they are degraded by the proteasome. The NPLOC4-UFD1-VCP complex regulates spindle disassembly at the end of mitosis and is necessary for the formation of a closed nuclear envelope. It may be involved in the development of some ectoderm-derived structures. Acts as a negative regulator of type I interferon production via the complex formed with VCP and NPLOC4, which binds to RIGI and recruits RNF125 to promote ubiquitination and degradation of RIGI. This chain is Ubiquitin recognition factor in ER-associated degradation protein 1, found in Homo sapiens (Human).